Here is a 322-residue protein sequence, read N- to C-terminus: L-asparaginase (322 aa).

The Asparaginase/glutaminase domain occupies Lys3–Tyr322. The O-isoaspartyl threonine intermediate role is filled by Thr13. Substrate contacts are provided by residues Ser56 and Thr89–Asp90.

The protein belongs to the asparaginase 1 family. Homotetramer.

Its subcellular location is the cytoplasm. It carries out the reaction L-asparagine + H2O = L-aspartate + NH4(+). The polypeptide is L-asparaginase (ansA) (Bacillus licheniformis).